Reading from the N-terminus, the 615-residue chain is Glutamine--fructose-6-phosphate aminotransferase [isomerizing] (615 aa).

The active-site Nucleophile; for GATase activity is Cys2. The Glutamine amidotransferase type-2 domain maps to Cys2–Asp220. 2 consecutive SIS domains span residues Ile287 to Thr427 and Leu460 to Pro605. Catalysis depends on Lys610, which acts as the For Fru-6P isomerization activity.

Homodimer.

The protein localises to the cytoplasm. The catalysed reaction is D-fructose 6-phosphate + L-glutamine = D-glucosamine 6-phosphate + L-glutamate. Its function is as follows. Catalyzes the first step in hexosamine metabolism, converting fructose-6P into glucosamine-6P using glutamine as a nitrogen source. The protein is Glutamine--fructose-6-phosphate aminotransferase [isomerizing] of Streptomyces coelicolor (strain ATCC BAA-471 / A3(2) / M145).